The primary structure comprises 210 residues: uncharacterized protein (210 aa).

4 helical membrane passes run 5–25 (LAYIPIAAMMVIIPGADTMLV), 50–70 (FWTVIAILGLSVVIAKSVILF), 75–95 (YLGAAYLIYLGVKSFFAKSMF), and 155–175 (IILASILTLLAVLWFLFLVYI).

The protein belongs to the Rht family.

The protein localises to the cell membrane. This is an uncharacterized protein from Bacillus subtilis (strain 168).